The chain runs to 182 residues: CASP-like protein 5A1 (182 aa).

Residues 1 to 47 (MEMASHPAVHPVALPPPYQAVGPPAPPAVRINDFPGSPGTLMGLALR) are Cytoplasmic-facing. The helical transmembrane segment at 48 to 68 (FAQLGFALTALCIMVSIVGFS) threads the bilayer. At 69–72 (SVTA) the chain is on the extracellular side. Residues 73 to 93 (FCFLVAAMVLQCIWSLCLGVL) form a helical membrane-spanning segment. Over 94–117 (DCYALLTKRSLRNSLILSFFVVGD) the chain is Cytoplasmic. A helical transmembrane segment spans residues 118 to 138 (WITSTMTFAGACAAAGITVLI). The Extracellular segment spans residues 139–158 (DNDLNQCGPNHCNRFEAAAA). The helical transmembrane segment at 159–179 (MAFMSWVITTISFFLSFWILV) threads the bilayer. The Cytoplasmic segment spans residues 180–182 (TCR).

It belongs to the Casparian strip membrane proteins (CASP) family. In terms of assembly, homodimer and heterodimers.

It is found in the cell membrane. The sequence is that of CASP-like protein 5A1 from Physcomitrium patens (Spreading-leaved earth moss).